A 466-amino-acid polypeptide reads, in one-letter code: 3-isopropylmalate dehydratase large subunit (466 aa).

3 residues coordinate [4Fe-4S] cluster: cysteine 347, cysteine 407, and cysteine 410.

The protein belongs to the aconitase/IPM isomerase family. LeuC type 1 subfamily. As to quaternary structure, heterodimer of LeuC and LeuD. [4Fe-4S] cluster is required as a cofactor.

The catalysed reaction is (2R,3S)-3-isopropylmalate = (2S)-2-isopropylmalate. It participates in amino-acid biosynthesis; L-leucine biosynthesis; L-leucine from 3-methyl-2-oxobutanoate: step 2/4. Catalyzes the isomerization between 2-isopropylmalate and 3-isopropylmalate, via the formation of 2-isopropylmaleate. In Shigella sonnei (strain Ss046), this protein is 3-isopropylmalate dehydratase large subunit.